Consider the following 216-residue polypeptide: DNA-directed RNA polymerase subunit alpha (216 aa).

It belongs to the RNA polymerase alpha chain family. In plastids the minimal PEP RNA polymerase catalytic core is composed of four subunits: alpha, beta, beta', and beta''. When a (nuclear-encoded) sigma factor is associated with the core the holoenzyme is formed, which can initiate transcription.

It is found in the plastid. Its subcellular location is the chloroplast. The catalysed reaction is RNA(n) + a ribonucleoside 5'-triphosphate = RNA(n+1) + diphosphate. In terms of biological role, DNA-dependent RNA polymerase catalyzes the transcription of DNA into RNA using the four ribonucleoside triphosphates as substrates. The protein is DNA-directed RNA polymerase subunit alpha (rpoA) of Euglena granulata.